The chain runs to 245 residues: 1-(5-phosphoribosyl)-5-[(5-phosphoribosylamino)methylideneamino] imidazole-4-carboxamide isomerase (245 aa).

Catalysis depends on Asp7, which acts as the Proton acceptor. Asp129 acts as the Proton donor in catalysis.

It belongs to the HisA/HisF family.

It is found in the cytoplasm. It carries out the reaction 1-(5-phospho-beta-D-ribosyl)-5-[(5-phospho-beta-D-ribosylamino)methylideneamino]imidazole-4-carboxamide = 5-[(5-phospho-1-deoxy-D-ribulos-1-ylimino)methylamino]-1-(5-phospho-beta-D-ribosyl)imidazole-4-carboxamide. It participates in amino-acid biosynthesis; L-histidine biosynthesis; L-histidine from 5-phospho-alpha-D-ribose 1-diphosphate: step 4/9. In Shewanella oneidensis (strain ATCC 700550 / JCM 31522 / CIP 106686 / LMG 19005 / NCIMB 14063 / MR-1), this protein is 1-(5-phosphoribosyl)-5-[(5-phosphoribosylamino)methylideneamino] imidazole-4-carboxamide isomerase.